The following is a 723-amino-acid chain: Aminodeoxychorismate synthase (723 aa).

The Glutamine amidotransferase type-1 domain maps to 2 to 195; it reads RTLLVDNYDS…RDLTERHGRT (194 aa). The Nucleophile role is filled by cysteine 82. The interval 96 to 117 is disordered; it reads VGRAPEPRHGRTSAVRHDGTGL. Residues 98 to 114 show a composition bias toward basic and acidic residues; it reads RAPEPRHGRTSAVRHDG. Active-site residues include histidine 169 and glutamate 171. Disordered stretches follow at residues 192 to 219 and 693 to 723; these read HGRT…KATT and FPGR…VLPG. Residues 255 to 723 are PABB component; the sequence is LDSSRPGGEL…GAPKDLVLPG (469 aa). Basic and acidic residues predominate over residues 695-704; the sequence is GRERPGKDLD.

This sequence in the C-terminal section; belongs to the anthranilate synthase component I family.

The enzyme catalyses chorismate + L-glutamine = 4-amino-4-deoxychorismate + L-glutamate. It participates in antibiotic biosynthesis; candicidin biosynthesis. Functionally, involved in candicidin biosynthesis. Catalyzes the biosynthesis of 4-amino-4-deoxychorismate (ADC) from chorismate and glutamine. The protein is Aminodeoxychorismate synthase of Streptomyces griseus.